Consider the following 508-residue polypeptide: Aldehyde dehydrogenase family 7 member A1 (508 aa).

NAD(+) is bound at residue 244–249; sequence GSSKVG. Residue Glu-266 is the Proton acceptor of the active site. Cys-300 functions as the Nucleophile in the catalytic mechanism.

It belongs to the aldehyde dehydrogenase family. Homotetramer.

The enzyme catalyses an aldehyde + NAD(+) + H2O = a carboxylate + NADH + 2 H(+). This chain is Aldehyde dehydrogenase family 7 member A1, found in Pisum sativum (Garden pea).